Consider the following 472-residue polypeptide: ATP synthase subunit beta (472 aa).

Position 150–157 (150–157 (GGAGVGKT)) interacts with ATP.

It belongs to the ATPase alpha/beta chains family. As to quaternary structure, F-type ATPases have 2 components, CF(1) - the catalytic core - and CF(0) - the membrane proton channel. CF(1) has five subunits: alpha(3), beta(3), gamma(1), delta(1), epsilon(1). CF(0) has four main subunits: a, b, b' and c.

The protein localises to the cellular chromatophore membrane. It carries out the reaction ATP + H2O + 4 H(+)(in) = ADP + phosphate + 5 H(+)(out). Its function is as follows. Produces ATP from ADP in the presence of a proton gradient across the membrane. The catalytic sites are hosted primarily by the beta subunits. The sequence is that of ATP synthase subunit beta from Rhodobacter capsulatus (Rhodopseudomonas capsulata).